The following is a 221-amino-acid chain: 7-cyano-7-deazaguanine synthase (221 aa).

8–18 (MSGGMDSTLCA) is a binding site for ATP. Zn(2+) contacts are provided by cysteine 187, cysteine 195, cysteine 198, and cysteine 201.

This sequence belongs to the QueC family. It depends on Zn(2+) as a cofactor.

The catalysed reaction is 7-carboxy-7-deazaguanine + NH4(+) + ATP = 7-cyano-7-deazaguanine + ADP + phosphate + H2O + H(+). The protein operates within purine metabolism; 7-cyano-7-deazaguanine biosynthesis. Its function is as follows. Catalyzes the ATP-dependent conversion of 7-carboxy-7-deazaguanine (CDG) to 7-cyano-7-deazaguanine (preQ(0)). The chain is 7-cyano-7-deazaguanine synthase from Campylobacter concisus (strain 13826).